A 257-amino-acid polypeptide reads, in one-letter code: ATP synthase delta chain, chloroplastic (257 aa).

The N-terminal 70 residues, 1–70 (MAALQNPVAL…PRGGALGTRM (70 aa)), are a transit peptide targeting the chloroplast.

It belongs to the ATPase delta chain family. F-type ATPases have 2 components, CF(1) - the catalytic core - and CF(0) - the membrane proton channel. CF(1) has five subunits: alpha(3), beta(3), gamma(1), delta(1), epsilon(1). CF(0) has three main subunits: a, b and c.

Its subcellular location is the plastid. The protein localises to the chloroplast thylakoid membrane. Its function is as follows. This protein seems to be part of the stalk that links CF(0) to CF(1). It either transmits conformational changes from CF(0) into CF(1) or is implicated in proton conduction. The sequence is that of ATP synthase delta chain, chloroplastic (ATPD) from Spinacia oleracea (Spinach).